A 652-amino-acid chain; its full sequence is DNA ligase (652 aa).

Residues 29 to 33 (DSDYD), 78 to 79 (SL), and Glu-107 contribute to the NAD(+) site. Catalysis depends on Lys-109, which acts as the N6-AMP-lysine intermediate. Residues Arg-130, Glu-164, Lys-278, and Lys-302 each coordinate NAD(+). Positions 395, 398, 413, and 418 each coordinate Zn(2+). The 76-residue stretch at 577 to 652 (NSDAALFGLT…IEDEDWLRQL (76 aa)) folds into the BRCT domain.

It belongs to the NAD-dependent DNA ligase family. LigA subfamily. It depends on Mg(2+) as a cofactor. The cofactor is Mn(2+).

It carries out the reaction NAD(+) + (deoxyribonucleotide)n-3'-hydroxyl + 5'-phospho-(deoxyribonucleotide)m = (deoxyribonucleotide)n+m + AMP + beta-nicotinamide D-nucleotide.. In terms of biological role, DNA ligase that catalyzes the formation of phosphodiester linkages between 5'-phosphoryl and 3'-hydroxyl groups in double-stranded DNA using NAD as a coenzyme and as the energy source for the reaction. It is essential for DNA replication and repair of damaged DNA. In Streptococcus pyogenes serotype M3 (strain ATCC BAA-595 / MGAS315), this protein is DNA ligase.